A 299-amino-acid chain; its full sequence is Formylglycine-generating enzyme (299 aa).

The Cu cation site is built by Cys-263 and Cys-268.

Belongs to the sulfatase-modifying factor family. Cu cation serves as cofactor.

It catalyses the reaction L-cysteinyl-[sulfatase] + 2 a thiol + O2 = an organic disulfide + 3-oxo-L-alanyl-[sulfatase] + hydrogen sulfide + H2O + H(+). Its pathway is protein modification; sulfatase oxidation. In terms of biological role, oxidase that catalyzes the conversion of cysteine to 3-oxoalanine on target proteins. 3-oxoalanine modification, which is also named formylglycine (fGly), occurs in the maturation of arylsulfatases and some alkaline phosphatases that use the hydrated form of 3-oxoalanine as a catalytic nucleophile. This is Formylglycine-generating enzyme from Mycobacterium tuberculosis (strain ATCC 25618 / H37Rv).